The following is a 154-amino-acid chain: Nuclear cap-binding protein subunit 2 (154 aa).

The interval 1–23 is disordered; sequence MSTSVDLSSYRDQHFKGSRSEQE. The segment covering 9–23 has biased composition (basic and acidic residues); the sequence is SYRDQHFKGSRSEQE. MRNA-binding positions include Tyr-10, Tyr-33, 102–106, 113–117, and 123–124; these read RVDWD, RQYGR, and QV. In terms of domain architecture, RRM spans 30 to 108; sequence TTLYVGNLSF…RLIRVDWDAG (79 aa).

This sequence belongs to the RRM NCBP2 family. Component of the nuclear cap-binding complex (CBC), a heterodimer composed of Cbp80 and Cbp20 that interacts with m7GpppG-capped RNA. Interacts with Ars2.

The protein resides in the nucleus. Component of the cap-binding complex (CBC), which binds co-transcriptionally to the 5' cap of pre-mRNAs and is involved in various processes such as pre-mRNA splicing and RNA-mediated gene silencing (RNAi). The CBC complex is involved in miRNA-mediated RNA interference via its interaction with Ars2 and is required for primary microRNAs (miRNAs) processing. Also involved in innate immunity via the short interfering RNAs (siRNAs) processing machinery by restricting the viral RNA production. In the CBC complex, Cbp20 recognizes and binds capped RNAs (m7GpppG-capped RNA) but requires Cbp80 to stabilize the movement of its N-terminal loop and lock the CBC into a high affinity cap-binding state with the cap structure. In Drosophila ananassae (Fruit fly), this protein is Nuclear cap-binding protein subunit 2 (Cbp20).